Consider the following 467-residue polypeptide: Argininosuccinate lyase (467 aa).

Belongs to the lyase 1 family. Argininosuccinate lyase subfamily.

It is found in the cytoplasm. It catalyses the reaction 2-(N(omega)-L-arginino)succinate = fumarate + L-arginine. The protein operates within amino-acid biosynthesis; L-arginine biosynthesis; L-arginine from L-ornithine and carbamoyl phosphate: step 3/3. The polypeptide is Argininosuccinate lyase (Methylibium petroleiphilum (strain ATCC BAA-1232 / LMG 22953 / PM1)).